The sequence spans 155 residues: Large ribosomal subunit protein uL22c (155 aa).

The protein belongs to the universal ribosomal protein uL22 family. Part of the 50S ribosomal subunit.

The protein localises to the plastid. The protein resides in the chloroplast. Functionally, this protein binds specifically to 23S rRNA. In terms of biological role, the globular domain of the protein is located near the polypeptide exit tunnel on the outside of the subunit, while an extended beta-hairpin is found that lines the wall of the exit tunnel in the center of the 70S ribosome. The polypeptide is Large ribosomal subunit protein uL22c (rpl22) (Solanum tuberosum (Potato)).